A 1320-amino-acid polypeptide reads, in one-letter code: Immunoglobulin superfamily member 1 (1320 aa).

The signal sequence occupies residues 1-18 (MMLRTFTLLLLCIWLNRG). Topologically, residues 19–504 (MTSMAAVESQ…LPWNSILNEA (486 aa)) are extracellular. Ig-like C2-type domains are found at residues 29–113 (PELW…KILE), 115–212 (EAPG…KLVV), 224–308 (HPGP…IWVT), 312–399 (PKTW…ATYN), and 401–482 (VELI…HRSE). Asn44 is a glycosylation site (N-linked (GlcNAc...) asparagine). The cysteines at positions 49 and 97 are disulfide-linked. N-linked (GlcNAc...) asparagine glycosylation is found at Asn329, Asn365, and Asn372. 2 cysteine pairs are disulfide-bonded: Cys334/Cys383 and Cys423/Cys466. Residues 505 to 525 (IRVSLTVQFLSLLLLVLWLQW) traverse the membrane as a helical segment. The Cytoplasmic segment spans residues 526–534 (KCRRLRLRE). Residues 535-555 (AWLLGTAQGVAMLVILIALLC) form a helical membrane-spanning segment. At 556 to 1320 (CGLCNGALTE…GVSVEQTVPI (765 aa)) the chain is on the extracellular side. 7 consecutive Ig-like C2-type domains span residues 572–665 (PTPK…VGTD), 662–756 (VGTD…ELVI), 761–853 (PKPF…LIVT), 857–942 (PKPT…YLST), 949–1044 (TDTF…ELIV), 1049–1134 (PKPS…NHSN), and 1145–1226 (PKPS…EPSD). N-linked (GlcNAc...) asparagine glycans are attached at residues Asn591, Asn731, Asn782, Asn830, Asn874, Asn923, Asn970, Asn1011, and Asn1066. A disulfide bond links Cys783 and Cys833. A disulfide bridge links Cys879 with Cys926. Cys1071 and Cys1118 are oxidised to a cystine. N-linked (GlcNAc...) asparagine glycosylation is found at Asn1131 and Asn1207. A disulfide bridge links Cys1167 with Cys1210.

Interacts with INHA; the interaction is not confirmed by standard receptor binding assays. Interacts with ACVR1B; the interaction appears to be ligand-dependent as it is diminished by inhibin B and activin A. Interacts with ACVR2A, ACVR2B, ACVRL1 and BMPR1B. Interacts with HECTD1. Expressed in pituitary gland, testis and liver. Isoform 2 is expressed pituitary gland and testis.

The protein localises to the membrane. It localises to the secreted. Functionally, seems to be a coreceptor in inhibin signaling, but seems not to be a high-affinity inhibin receptor. Antagonizes activin A signaling in the presence or absence of inhibin B. Necessary to mediate a specific antagonistic effect of inhibin B on activin-stimulated transcription. This is Immunoglobulin superfamily member 1 (Igsf1) from Rattus norvegicus (Rat).